The primary structure comprises 149 residues: UPF0208 membrane protein VSAL_I2111 (149 aa).

The next 2 membrane-spanning stretches (helical) occupy residues 41–61 and 69–89; these read FAVK…MVFN and SIII…WLGN.

Belongs to the UPF0208 family.

The protein resides in the cell inner membrane. In Aliivibrio salmonicida (strain LFI1238) (Vibrio salmonicida (strain LFI1238)), this protein is UPF0208 membrane protein VSAL_I2111.